The sequence spans 608 residues: Elongation factor 4 (608 aa).

Residues 11-193 (KKIRNFSIIA…QIVEKVPEPS (183 aa)) enclose the tr-type G domain. GTP contacts are provided by residues 23–28 (DHGKST) and 140–143 (NKID).

Belongs to the TRAFAC class translation factor GTPase superfamily. Classic translation factor GTPase family. LepA subfamily.

Its subcellular location is the cell membrane. It catalyses the reaction GTP + H2O = GDP + phosphate + H(+). Required for accurate and efficient protein synthesis under certain stress conditions. May act as a fidelity factor of the translation reaction, by catalyzing a one-codon backward translocation of tRNAs on improperly translocated ribosomes. Back-translocation proceeds from a post-translocation (POST) complex to a pre-translocation (PRE) complex, thus giving elongation factor G a second chance to translocate the tRNAs correctly. Binds to ribosomes in a GTP-dependent manner. The sequence is that of Elongation factor 4 from Listeria welshimeri serovar 6b (strain ATCC 35897 / DSM 20650 / CCUG 15529 / CIP 8149 / NCTC 11857 / SLCC 5334 / V8).